The primary structure comprises 202 residues: Probable thymidylate kinase (202 aa).

13-20 (GIDGSGKT) lines the ATP pocket.

The protein belongs to the thymidylate kinase family.

It catalyses the reaction dTMP + ATP = dTDP + ADP. In Picrophilus torridus (strain ATCC 700027 / DSM 9790 / JCM 10055 / NBRC 100828 / KAW 2/3), this protein is Probable thymidylate kinase.